Here is a 391-residue protein sequence, read N- to C-terminus: Processive diacylglycerol beta-glucosyltransferase (391 aa).

It belongs to the glycosyltransferase 28 family. UgtP subfamily.

The protein localises to the cell membrane. The catalysed reaction is a 1,2-diacyl-3-O-(beta-D-glucopyranosyl)-sn-glycerol + UDP-alpha-D-glucose = a 1,2-diacyl-3-O-(beta-D-Glc-(1-&gt;6)-beta-D-Glc)-sn-glycerol + UDP + H(+). It carries out the reaction a 1,2-diacyl-sn-glycerol + UDP-alpha-D-glucose = a 1,2-diacyl-3-O-(beta-D-glucopyranosyl)-sn-glycerol + UDP + H(+). The protein operates within glycolipid metabolism; diglucosyl-diacylglycerol biosynthesis. In terms of biological role, processive glucosyltransferase involved in the biosynthesis of both the bilayer- and non-bilayer-forming membrane glucolipids. Is able to successively transfer two glucosyl residues to diacylglycerol (DAG), thereby catalyzing the formation of beta-monoglucosyl-DAG (3-O-(beta-D-glucopyranosyl)-1,2-diacyl-sn-glycerol) and beta-diglucosyl-DAG (3-O-(beta-D-glucopyranosyl-beta-(1-&gt;6)-D-glucopyranosyl)-1,2-diacyl-sn-glycerol). Beta-diglucosyl-DAG is the predominant glycolipid found in Bacillales and is also used as a membrane anchor for lipoteichoic acid (LTA). This is Processive diacylglycerol beta-glucosyltransferase from Staphylococcus saprophyticus subsp. saprophyticus (strain ATCC 15305 / DSM 20229 / NCIMB 8711 / NCTC 7292 / S-41).